A 288-amino-acid polypeptide reads, in one-letter code: MAFEQRIEAAMAAAIARGQGSEAPSKLATALDYAVTPGGARIRPTLLLSVATACGDDRPALSDAAAVALELIHCASLVHDDLPCFDDAEIRRGKPTVHRAYSEPLAILTGDSLIVMGFEVLARAAADQPQRALQLVTALAVRTGMPMGICAGQGWESESQINLSAYHRAKTGALFIAATQMGAIAAGYEAEPWEELGARIGEAFQVADDLRDALCDAETLGKPAGQDEIHARPNAVREYGVEGAAKRLKDILGGAIASIPSCPGEAMLAEMVRRYAEKIVPAQVAARV.

2 residues coordinate isopentenyl diphosphate: Arg43 and His73. Mg(2+) is bound by residues Asp80 and Asp86. Arg91 is a (2E,6E)-farnesyl diphosphate binding site. Arg92 lines the isopentenyl diphosphate pocket. Residues Lys170, Thr171, and Gln205 each coordinate (2E,6E)-farnesyl diphosphate.

Belongs to the FPP/GGPP synthase family. Mg(2+) is required as a cofactor.

The catalysed reaction is isopentenyl diphosphate + (2E,6E)-farnesyl diphosphate = (2E,6E,10E)-geranylgeranyl diphosphate + diphosphate. Its pathway is isoprenoid biosynthesis; geranylgeranyl diphosphate biosynthesis; geranylgeranyl diphosphate from farnesyl diphosphate and isopentenyl diphosphate: step 1/1. Its function is as follows. Catalyzes the condensation of farnesyl diphosphate (FPP) and isopentenyl diphosphate (IPP) to yield geranylgeranyl diphosphate (GGPP) needed for biosynthesis of carotenoids and diterpenes. This Cereibacter sphaeroides (strain ATCC 17023 / DSM 158 / JCM 6121 / CCUG 31486 / LMG 2827 / NBRC 12203 / NCIMB 8253 / ATH 2.4.1.) (Rhodobacter sphaeroides) protein is Geranylgeranyl diphosphate synthase (crtE).